The primary structure comprises 94 residues: Large ribosomal subunit protein uL23 (94 aa).

The protein belongs to the universal ribosomal protein uL23 family. Part of the 50S ribosomal subunit. Contacts protein L29, and trigger factor when it is bound to the ribosome.

One of the early assembly proteins it binds 23S rRNA. One of the proteins that surrounds the polypeptide exit tunnel on the outside of the ribosome. Forms the main docking site for trigger factor binding to the ribosome. The sequence is that of Large ribosomal subunit protein uL23 from Trichlorobacter lovleyi (strain ATCC BAA-1151 / DSM 17278 / SZ) (Geobacter lovleyi).